A 379-amino-acid chain; its full sequence is Homoserine O-acetyltransferase (379 aa).

Residues 52–356 form the AB hydrolase-1 domain; that stretch reads NVVVVLHALT…VYGHDGFLVE (305 aa). Serine 157 (nucleophile) is an active-site residue. Substrate is bound at residue arginine 227. Residues aspartate 320 and histidine 350 contribute to the active site. Aspartate 351 is a substrate binding site.

It belongs to the AB hydrolase superfamily. MetX family. In terms of assembly, homodimer.

The protein resides in the cytoplasm. The catalysed reaction is L-homoserine + acetyl-CoA = O-acetyl-L-homoserine + CoA. It participates in amino-acid biosynthesis; L-methionine biosynthesis via de novo pathway; O-acetyl-L-homoserine from L-homoserine: step 1/1. Transfers an acetyl group from acetyl-CoA to L-homoserine, forming acetyl-L-homoserine. This chain is Homoserine O-acetyltransferase, found in Mycobacterium tuberculosis (strain CDC 1551 / Oshkosh).